The sequence spans 449 residues: Tubulin beta-6 chain (449 aa).

The GTP site is built by Q11, E69, S138, G142, T143, G144, N204, and N226. Position 69 (E69) interacts with Mg(2+). The disordered stretch occupies residues 425-449 (YQDATADDEGEYEEDEDEEEILDHE). The segment covering 429–449 (TADDEGEYEEDEDEEEILDHE) has biased composition (acidic residues).

This sequence belongs to the tubulin family. Dimer of alpha and beta chains. A typical microtubule is a hollow water-filled tube with an outer diameter of 25 nm and an inner diameter of 15 nM. Alpha-beta heterodimers associate head-to-tail to form protofilaments running lengthwise along the microtubule wall with the beta-tubulin subunit facing the microtubule plus end conferring a structural polarity. Microtubules usually have 13 protofilaments but different protofilament numbers can be found in some organisms and specialized cells. Mg(2+) is required as a cofactor.

It localises to the cytoplasm. Its subcellular location is the cytoskeleton. Functionally, tubulin is the major constituent of microtubules, a cylinder consisting of laterally associated linear protofilaments composed of alpha- and beta-tubulin heterodimers. Microtubules grow by the addition of GTP-tubulin dimers to the microtubule end, where a stabilizing cap forms. Below the cap, tubulin dimers are in GDP-bound state, owing to GTPase activity of alpha-tubulin. The chain is Tubulin beta-6 chain (TUBB6) from Arabidopsis thaliana (Mouse-ear cress).